Consider the following 425-residue polypeptide: UPF0597 protein Swoo_4889 (425 aa).

It belongs to the UPF0597 family.

This Shewanella woodyi (strain ATCC 51908 / MS32) protein is UPF0597 protein Swoo_4889.